Reading from the N-terminus, the 598-residue chain is Kinesin-like protein klp-3 (598 aa).

Coiled coils occupy residues 19-66 and 89-118; these read EVEL…FIQG and GNLSEENLRLKNALSQMQKVARVNELLETD. The segment at 133-155 is disordered; that stretch reads ALSRDSSCSVPRSVSPQPTGDVI. Residues 136 to 150 are compositionally biased toward polar residues; that stretch reads RDSSCSVPRSVSPQP. Residues 170–248 are a coiled coil; the sequence is HWKKLQRCAE…LVELNGNIRV (79 aa). Residues 245–565 enclose the Kinesin motor domain; sequence NIRVFYRIRP…VNFAEKIGQV (321 aa). Residue 328–335 coordinates ATP; the sequence is GHTGSGKT. A disordered region spans residues 569-598; that stretch reads SGTMKREPTRRSMTGISSGQRREIPASPRK.

This sequence belongs to the TRAFAC class myosin-kinesin ATPase superfamily. Kinesin family.

Its subcellular location is the cytoplasm. The protein localises to the cytoskeleton. The polypeptide is Kinesin-like protein klp-3 (klp-3) (Caenorhabditis elegans).